Reading from the N-terminus, the 149-residue chain is Inner membrane protein YdcZ (149 aa).

The Periplasmic segment spans residues 1-4 (MNQS). The chain crosses the membrane as a helical span at residues 5-25 (LTLAFLIAAGIGLVVQNTLMV). Residues 26-33 (RITQTSST) lie on the Cytoplasmic side of the membrane. The helical transmembrane segment at 34 to 54 (ILIAMLLNSLVGIVLFVSILW) threads the bilayer. Residues 55–70 (FKQGMAGFGELVSSVR) are Periplasmic-facing. Residues 71–91 (WWTLIPGLLGSFFVFASISGY) traverse the membrane as a helical segment. The Cytoplasmic portion of the chain corresponds to 92–93 (QN). Residues 94-114 (VGAATTIAVLVASQLIGGLML) traverse the membrane as a helical segment. Residues 115–123 (DIFRSHGVP) are Periplasmic-facing. Residues 124–144 (LRALFGPICGAILLVVGAWLV) form a helical membrane-spanning segment. At 145–149 (ARRSF) the chain is on the cytoplasmic side.

Its subcellular location is the cell inner membrane. In Escherichia coli (strain K12), this protein is Inner membrane protein YdcZ (ydcZ).